A 311-amino-acid polypeptide reads, in one-letter code: Probable cell division protein WhiA (311 aa).

The segment at residues 277 to 311 is a DNA-binding region (H-T-H motif); the sequence is TLKEVADQIPDGPISKSGVNHRFKKLHEIAESLRE.

Belongs to the WhiA family.

Functionally, involved in cell division and chromosome segregation. The polypeptide is Probable cell division protein WhiA (Lactobacillus acidophilus (strain ATCC 700396 / NCK56 / N2 / NCFM)).